Consider the following 590-residue polypeptide: Glutathione S-transferase T3 (590 aa).

One can recognise a GST N-terminal domain in the interval 1-82; sequence MKLKVYADRM…YLSSAYPSVV (82 aa). Residues 11 to 12, 40 to 41, 53 to 54, and 66 to 67 contribute to the glutathione site; these read SQ, QL, KV, and ES. Residues 89–232 form the GST C-terminal domain; it reads DLSKRARIHS…KDRCQKQREM (144 aa). Positions 265–336 constitute a Myb-like domain; that stretch reads DRRKHRRKWS…HCKQRWSKLN (72 aa). The segment at 402–427 is disordered; the sequence is SKGGGSSKRTKLNNGDRVYSSSSNPE.

Belongs to the GST superfamily. Theta family.

The protein localises to the nucleus. It carries out the reaction RX + glutathione = an S-substituted glutathione + a halide anion + H(+). In terms of biological role, may be involved in the conjugation of reduced glutathione to a wide number of exogenous and endogenous hydrophobic electrophiles and have a detoxification role against certain herbicides. In Arabidopsis thaliana (Mouse-ear cress), this protein is Glutathione S-transferase T3 (GSTT3).